Consider the following 364-residue polypeptide: tRNA 2-selenouridine synthase (364 aa).

The 124-residue stretch at 12–135 folds into the Rhodanese domain; it reads FLNDRPMMDT…MRTFLLDTTE (124 aa). Catalysis depends on C95, which acts as the S-selanylcysteine intermediate.

It belongs to the SelU family. Monomer.

It catalyses the reaction 5-methylaminomethyl-2-thiouridine(34) in tRNA + selenophosphate + (2E)-geranyl diphosphate + H2O + H(+) = 5-methylaminomethyl-2-selenouridine(34) in tRNA + (2E)-thiogeraniol + phosphate + diphosphate. The catalysed reaction is 5-methylaminomethyl-2-thiouridine(34) in tRNA + (2E)-geranyl diphosphate = 5-methylaminomethyl-S-(2E)-geranyl-thiouridine(34) in tRNA + diphosphate. It carries out the reaction 5-methylaminomethyl-S-(2E)-geranyl-thiouridine(34) in tRNA + selenophosphate + H(+) = 5-methylaminomethyl-2-(Se-phospho)selenouridine(34) in tRNA + (2E)-thiogeraniol. The enzyme catalyses 5-methylaminomethyl-2-(Se-phospho)selenouridine(34) in tRNA + H2O = 5-methylaminomethyl-2-selenouridine(34) in tRNA + phosphate. In terms of biological role, involved in the post-transcriptional modification of the uridine at the wobble position (U34) of tRNA(Lys), tRNA(Glu) and tRNA(Gln). Catalyzes the conversion of 2-thiouridine (S2U-RNA) to 2-selenouridine (Se2U-RNA). Acts in a two-step process involving geranylation of 2-thiouridine (S2U) to S-geranyl-2-thiouridine (geS2U) and subsequent selenation of the latter derivative to 2-selenouridine (Se2U) in the tRNA chain. This is tRNA 2-selenouridine synthase from Pseudomonas fluorescens (strain ATCC BAA-477 / NRRL B-23932 / Pf-5).